Reading from the N-terminus, the 582-residue chain is Putative phospholipase B-like 2 (582 aa).

The first 42 residues, 1 to 42, serve as a signal peptide directing secretion; sequence MTRLIRSKKQFLIRSLHSVFYYLGSLLHSTFEMNVFIGLLLA. Residues N91, N141, N178, N224, and N318 are each glycosylated (N-linked (GlcNAc...) asparagine). A disulfide bridge connects residues C139 and C146. The cysteines at positions 480 and 482 are disulfide-linked. N502 carries N-linked (GlcNAc...) asparagine glycosylation.

It belongs to the phospholipase B-like family.

The protein localises to the secreted. Putative phospholipase. The polypeptide is Putative phospholipase B-like 2 (Caenorhabditis elegans).